The sequence spans 250 residues: Cytochrome c oxidase subunit 2 (250 aa).

The Mitochondrial intermembrane segment spans residues M1–N39. A helical membrane pass occupies residues I40 to I60. Residues N61–E81 are Mitochondrial matrix-facing. A helical transmembrane segment spans residues L82–Y104. Residues L105 to Q250 are Mitochondrial intermembrane-facing. Positions 185, 220, 222, 224, 228, and 231 each coordinate Cu cation. E222 contacts Mg(2+).

Belongs to the cytochrome c oxidase subunit 2 family. In terms of assembly, component of the cytochrome c oxidase (complex IV, CIV), a multisubunit enzyme composed of a catalytic core of 3 subunits and several supernumerary subunits. The complex exists as a monomer or a dimer and forms supercomplexes (SCs) in the inner mitochondrial membrane with ubiquinol-cytochrome c oxidoreductase (cytochrome b-c1 complex, complex III, CIII). It depends on Cu cation as a cofactor.

It is found in the mitochondrion inner membrane. The catalysed reaction is 4 Fe(II)-[cytochrome c] + O2 + 8 H(+)(in) = 4 Fe(III)-[cytochrome c] + 2 H2O + 4 H(+)(out). In terms of biological role, component of the cytochrome c oxidase, the last enzyme in the mitochondrial electron transport chain which drives oxidative phosphorylation. The respiratory chain contains 3 multisubunit complexes succinate dehydrogenase (complex II, CII), ubiquinol-cytochrome c oxidoreductase (cytochrome b-c1 complex, complex III, CIII) and cytochrome c oxidase (complex IV, CIV), that cooperate to transfer electrons derived from NADH and succinate to molecular oxygen, creating an electrochemical gradient over the inner membrane that drives transmembrane transport and the ATP synthase. Cytochrome c oxidase is the component of the respiratory chain that catalyzes the reduction of oxygen to water. Electrons originating from reduced cytochrome c in the intermembrane space (IMS) are transferred via the dinuclear copper A center (CU(A)) of subunit 2 and heme A of subunit 1 to the active site in subunit 1, a binuclear center (BNC) formed by heme A3 and copper B (CU(B)). The BNC reduces molecular oxygen to 2 water molecules using 4 electrons from cytochrome c in the IMS and 4 protons from the mitochondrial matrix. The protein is Cytochrome c oxidase subunit 2 (COII) of Podospora anserina (strain S / ATCC MYA-4624 / DSM 980 / FGSC 10383) (Pleurage anserina).